Consider the following 184-residue polypeptide: Probable RNA 2'-phosphotransferase (184 aa).

Belongs to the KptA/TPT1 family.

In terms of biological role, removes the 2'-phosphate from RNA via an intermediate in which the phosphate is ADP-ribosylated by NAD followed by a presumed transesterification to release the RNA and generate ADP-ribose 1''-2''-cyclic phosphate (APPR&gt;P). May function as an ADP-ribosylase. This Rhizobium johnstonii (strain DSM 114642 / LMG 32736 / 3841) (Rhizobium leguminosarum bv. viciae) protein is Probable RNA 2'-phosphotransferase.